A 505-amino-acid polypeptide reads, in one-letter code: Protein disulfide-isomerase A3 (505 aa).

Positions 1–24 (MRLRRLALFPGVALLLAAARLAAA) are cleaved as a signal peptide. Residues 25-133 (SDVLELTDDN…IVSHLKKQAG (109 aa)) form the Thioredoxin 1 domain. Active-site nucleophile residues include Cys57 and Cys60. A disulfide bridge links Cys57 with Cys60. At Lys61 the chain carries N6-methyllysine. A disulfide bond links Cys85 and Cys92. Residue Lys129 is modified to N6-succinyllysine. Lys152 bears the N6-acetyllysine mark. Position 218 is an N6-succinyllysine (Lys218). Position 252 is an N6-acetyllysine (Lys252). The residue at position 319 (Thr319) is a Phosphothreonine. Residues 343–485 (SRDGKALERF…FISYLQREAT (143 aa)) enclose the Thioredoxin 2 domain. Lys362 is modified (N6-acetyllysine). Active-site nucleophile residues include Cys406 and Cys409. Cys406 and Cys409 form a disulfide bridge. The disordered stretch occupies residues 484 to 505 (ATNPPVIQEEKPKKKKKAQEDL). Positions 491-505 (QEEKPKKKKKAQEDL) are enriched in basic and acidic residues. Lys494 is modified (N6-acetyllysine). The Prevents secretion from ER motif lies at 502 to 505 (QEDL).

The protein belongs to the protein disulfide isomerase family. As to quaternary structure, part of the major histocompatibility complex class I (MHC I) peptide loading complex composed of TAP1, TAP2, B2M, MHC heavy chain, TAPBP, PDIA3, and CALR. Interacts with ERP27 and CANX. Interacts with SERPINA2 and with SERPINA1. Interacts with ATP2A2. In terms of processing, within the major histocompatibility complex class I (MHC I) peptide loading complex forms reversible disulfide-linked heterodimers with TAPBP as part of its protein folding chaperone activity. This is essential to assist the dynamic assembly of the MHC I complex with high affinity antigens in the endoplasmic reticulum. Post-translationally, phosphorylated.

It is found in the endoplasmic reticulum. The protein localises to the endoplasmic reticulum lumen. Its subcellular location is the melanosome. It catalyses the reaction Catalyzes the rearrangement of -S-S- bonds in proteins.. Functionally, protein disulfide isomerase that catalyzes the formation, isomerization, and reduction or oxidation of disulfide bonds in client proteins and functions as a protein folding chaperone. Core component of the major histocompatibility complex class I (MHC I) peptide loading complex where it functions as an essential folding chaperone for TAPBP. Through TAPBP, assists the dynamic assembly of the MHC I complex with high affinity antigens in the endoplasmic reticulum. Therefore, plays a crucial role in the presentation of antigens to cytotoxic T cells in adaptive immunity. The polypeptide is Protein disulfide-isomerase A3 (PDIA3) (Chlorocebus aethiops (Green monkey)).